Here is an 832-residue protein sequence, read N- to C-terminus: Conserved oligomeric Golgi complex subunit 5 (832 aa).

2 stretches are compositionally biased toward pro residues: residues M1–S11 and N23–T38. Residues M1–S49 are disordered. Residues P39 to S49 show a composition bias toward low complexity.

The protein belongs to the COG5 family. In terms of assembly, homodimer. Component of the conserved oligomeric Golgi complex which is composed of eight different subunits and is required for normal Golgi morphology and localization. Interacts with COG3, COG6, COG7 and COG8.

The protein localises to the golgi apparatus membrane. Functionally, required for normal Golgi function. The protein is Conserved oligomeric Golgi complex subunit 5 of Arabidopsis thaliana (Mouse-ear cress).